The following is a 580-amino-acid chain: Trafficking protein particle complex subunit 14 (580 aa).

Disordered regions lie at residues 95–134 and 480–533; these read GSAG…TSGG and VSHP…RSGS. A compositionally biased stretch (gly residues) spans 105–116; it reads PGGGDPGGGGLF. A Phosphoserine modification is found at serine 491. The span at 492–502 shows a compositional bias: low complexity; the sequence is RKSSPSSPAVR. Residues 512–525 are compositionally biased toward polar residues; the sequence is LGRSQSFSHQQPSR. A Phosphoserine modification is found at serine 517. Threonine 541 carries the post-translational modification Phosphothreonine. Phosphoserine is present on serine 546.

As to quaternary structure, component of the multisubunit TRAPP II complex, which includes at least TRAPPC1, TRAPPC2, TRAPPC2L, TRAPPC3, TRAPPC4, TRAPPC5, TRAPPC6A/B, TRAPPC9, TRAPPC10 and TRAPPC14. TRAPPC9, TRAPPC10 and TRAPPC14 are specific subunits of the TRAPP II complex. Interacts with alpha-tubulin during mitosis. Interacts with RAB3IP (via the N-terminal region); this interaction mediates RAB3IP association with the TRAPP II complex. Interacts with TRAPPC10. Interacts with FBF1.

The protein localises to the cytoplasm. Its subcellular location is the cytoskeleton. The protein resides in the spindle. It is found in the vesicle. It localises to the midbody. Specific subunit of the TRAPP (transport protein particle) II complex, a highly conserved vesicle tethering complex that functions in late Golgi trafficking as a membrane tether. TRAPPC14 is dispensable for TRAPPII complex integrity but mediates RAB3IP preciliary vesicle trafficking to the mother centriole during ciliogenesis. Modulates YAP1 activity as transcriptional regulator. This is Trafficking protein particle complex subunit 14 from Mus musculus (Mouse).